A 393-amino-acid chain; its full sequence is Arginine biosynthesis bifunctional protein ArgJ 3 (393 aa).

Positions 148, 170, 181, 260, 388, and 393 each coordinate substrate. The active-site Nucleophile is the Thr-181.

Belongs to the ArgJ family. Heterotetramer of two alpha and two beta chains.

The protein resides in the cytoplasm. It carries out the reaction N(2)-acetyl-L-ornithine + L-glutamate = N-acetyl-L-glutamate + L-ornithine. The enzyme catalyses L-glutamate + acetyl-CoA = N-acetyl-L-glutamate + CoA + H(+). It functions in the pathway amino-acid biosynthesis; L-arginine biosynthesis; L-ornithine and N-acetyl-L-glutamate from L-glutamate and N(2)-acetyl-L-ornithine (cyclic): step 1/1. Its pathway is amino-acid biosynthesis; L-arginine biosynthesis; N(2)-acetyl-L-ornithine from L-glutamate: step 1/4. Its function is as follows. Catalyzes two activities which are involved in the cyclic version of arginine biosynthesis: the synthesis of N-acetylglutamate from glutamate and acetyl-CoA as the acetyl donor, and of ornithine by transacetylation between N(2)-acetylornithine and glutamate. The chain is Arginine biosynthesis bifunctional protein ArgJ 3 from Streptomyces clavuligerus.